The sequence spans 540 residues: GMP synthase [glutamine-hydrolyzing] (540 aa).

A Glutamine amidotransferase type-1 domain is found at 29 to 222; the sequence is KILIVDFGSQ…VRKVAGLTGD (194 aa). Cys-106 acts as the Nucleophile in catalysis. Active-site residues include His-196 and Glu-198. Residues 223–415 enclose the GMPS ATP-PPase domain; that stretch reads WTMRAFREEA…LGLPDVFVGR (193 aa). 250–256 lines the ATP pocket; it reads SGGVDSA.

In terms of assembly, homodimer.

The catalysed reaction is XMP + L-glutamine + ATP + H2O = GMP + L-glutamate + AMP + diphosphate + 2 H(+). Its pathway is purine metabolism; GMP biosynthesis; GMP from XMP (L-Gln route): step 1/1. Its function is as follows. Catalyzes the synthesis of GMP from XMP. The polypeptide is GMP synthase [glutamine-hydrolyzing] (Rhodopseudomonas palustris (strain ATCC BAA-98 / CGA009)).